Here is a 157-residue protein sequence, read N- to C-terminus: Ribosome-binding factor A (157 aa).

Positions 124–157 (SAGAQFAGDADPYRKPESDDESDTAAKTDGDAAE) are disordered. A compositionally biased stretch (basic and acidic residues) spans 147-157 (TAAKTDGDAAE).

Belongs to the RbfA family. Monomer. Binds 30S ribosomal subunits, but not 50S ribosomal subunits or 70S ribosomes.

Its subcellular location is the cytoplasm. In terms of biological role, one of several proteins that assist in the late maturation steps of the functional core of the 30S ribosomal subunit. Associates with free 30S ribosomal subunits (but not with 30S subunits that are part of 70S ribosomes or polysomes). Required for efficient processing of 16S rRNA. May interact with the 5'-terminal helix region of 16S rRNA. This chain is Ribosome-binding factor A, found in Streptomyces avermitilis (strain ATCC 31267 / DSM 46492 / JCM 5070 / NBRC 14893 / NCIMB 12804 / NRRL 8165 / MA-4680).